The primary structure comprises 378 residues: Outer membrane protein (378 aa).

Residues 1–22 (MRLRTALLATTLMAAAPVAANA) form the signal peptide. Positions 258–378 (PPAPTPARTY…QNRRVEIILH (121 aa)) constitute an OmpA-like domain.

It localises to the cell outer membrane. Functionally, growth enhancer. The sequence is that of Outer membrane protein from Gluconacetobacter diazotrophicus (strain ATCC 49037 / DSM 5601 / CCUG 37298 / CIP 103539 / LMG 7603 / PAl5).